Reading from the N-terminus, the 214-residue chain is Threonylcarbamoyl-AMP synthase (214 aa).

Positions 9-214 (TDSVIQAAHW…GDALTGQIIR (206 aa)) constitute a YrdC-like domain.

This sequence belongs to the SUA5 family. TsaC subfamily.

It localises to the cytoplasm. It carries out the reaction L-threonine + hydrogencarbonate + ATP = L-threonylcarbamoyladenylate + diphosphate + H2O. Required for the formation of a threonylcarbamoyl group on adenosine at position 37 (t(6)A37) in tRNAs that read codons beginning with adenine. Catalyzes the conversion of L-threonine, HCO(3)(-)/CO(2) and ATP to give threonylcarbamoyl-AMP (TC-AMP) as the acyladenylate intermediate, with the release of diphosphate. This Psychrobacter arcticus (strain DSM 17307 / VKM B-2377 / 273-4) protein is Threonylcarbamoyl-AMP synthase.